The following is a 685-amino-acid chain: DEAD-box ATP-dependent RNA helicase 7 (685 aa).

The interval 1–89 (MPSISMMSDA…SELVQADDLK (89 aa)) is disordered. Basic and acidic residues-rich tracts occupy residues 22 to 42 (MKSE…SSSK) and 66 to 78 (AVDL…KSDN). Residues 107 to 135 (NSLSNFRISKPLKDVLISKGIKALFPIQA) carry the Q motif motif. The region spanning 138-320 (FDNVIDGCDL…TRFLKSAKKT (183 aa)) is the Helicase ATP-binding domain. 151–158 (ARTGQGKT) serves as a coordination point for ATP. Residues 266–269 (DEAD) carry the DEAD box motif. The Helicase C-terminal domain maps to 349–491 (DLIPDIIRCY…LSAPQPVDVA (143 aa)).

This sequence belongs to the DEAD box helicase family. DDX21/DDX50 subfamily.

The protein resides in the nucleus. The catalysed reaction is ATP + H2O = ADP + phosphate + H(+). The sequence is that of DEAD-box ATP-dependent RNA helicase 7 (RH7) from Spinacia oleracea (Spinach).